A 267-amino-acid chain; its full sequence is 4-hydroxy-tetrahydrodipicolinate reductase (267 aa).

Residues glycine 8–methionine 13 and glutamate 34 each bind NAD(+). Residue arginine 35 participates in NADP(+) binding. Residues glycine 98–threonine 100 and alanine 122–methionine 125 contribute to the NAD(+) site. Histidine 155 acts as the Proton donor/acceptor in catalysis. Histidine 156 contacts (S)-2,3,4,5-tetrahydrodipicolinate. The active-site Proton donor is lysine 159. (S)-2,3,4,5-tetrahydrodipicolinate is bound at residue glycine 165–threonine 166.

It belongs to the DapB family.

Its subcellular location is the cytoplasm. It carries out the reaction (S)-2,3,4,5-tetrahydrodipicolinate + NAD(+) + H2O = (2S,4S)-4-hydroxy-2,3,4,5-tetrahydrodipicolinate + NADH + H(+). The enzyme catalyses (S)-2,3,4,5-tetrahydrodipicolinate + NADP(+) + H2O = (2S,4S)-4-hydroxy-2,3,4,5-tetrahydrodipicolinate + NADPH + H(+). Its pathway is amino-acid biosynthesis; L-lysine biosynthesis via DAP pathway; (S)-tetrahydrodipicolinate from L-aspartate: step 4/4. Functionally, catalyzes the conversion of 4-hydroxy-tetrahydrodipicolinate (HTPA) to tetrahydrodipicolinate. This Pelobacter propionicus (strain DSM 2379 / NBRC 103807 / OttBd1) protein is 4-hydroxy-tetrahydrodipicolinate reductase.